Reading from the N-terminus, the 137-residue chain is Proofreading thioesterase EntH (137 aa).

The Nucleophile or proton acceptor role is filled by Glu-63.

This sequence belongs to the thioesterase PaaI family. In terms of assembly, homotetramer. Dimer of dimers. Interacts specifically with the aryl carrier protein (ArCP) domain of EntB.

It localises to the cytoplasm. It functions in the pathway siderophore biosynthesis; enterobactin biosynthesis. Its function is as follows. Required for optimal enterobactin synthesis. Acts as a proofreading enzyme that prevents EntB misacylation by hydrolyzing the thioester bound existing between EntB and wrongly charged molecules. This Salmonella paratyphi B (strain ATCC BAA-1250 / SPB7) protein is Proofreading thioesterase EntH.